Consider the following 760-residue polypeptide: uncharacterized protein (760 aa).

The segment covering 578–587 (RNRKQSKLRI) has biased composition (basic residues). The tract at residues 578–604 (RNRKQSKLRISKQQEIQPQKEESVKKE) is disordered. Residues 595–604 (PQKEESVKKE) are compositionally biased toward basic and acidic residues.

Its subcellular location is the mitochondrion. This is an uncharacterized protein from Dictyostelium citrinum (Slime mold).